Reading from the N-terminus, the 87-residue chain is Small ribosomal subunit protein bS20 (87 aa).

Residues 1 to 11 (MANHKSALKRI) show a composition bias toward basic residues. Residues 1–23 (MANHKSALKRIKQTEKRTERNRH) are disordered.

This sequence belongs to the bacterial ribosomal protein bS20 family.

Functionally, binds directly to 16S ribosomal RNA. This chain is Small ribosomal subunit protein bS20, found in Geotalea uraniireducens (strain Rf4) (Geobacter uraniireducens).